Reading from the N-terminus, the 711-residue chain is MRYVVNPQLVLYVEKGQKIKRALYLTPYGTLDDKSPIYYFLSTHLKITDPEVHKRHILLTLKISQLKGYLCDLLRIRNDVIIYSHKNNLEYSYVDNTIFNPFAHTQKKTLIKSDGFLYNIYPDACDFLVIWVADAEDTSIAEFGSYEDVDVNILKFETRLLEVFDDLDLDMTIESKFNNIFRTNLKFTGLRKLIKKINEFNGSRYKSLLYKSDEYFINLTGNKFILTDERLNLTVWDSDGVVTFSSDGDTIMINNVKLFTSLLTDIDLQMERIKGDVTYKIFLSTPITSRIKLNIETSFIFVETATNNILLSADKRISIILAKNHISIKVKNYIPNIEKYFTFLVIAINSMFNNIQQASDFTKVETVYWSRICQNTKNKHRKPVIVSSLDEDMEKVSDNFYKSSTKEVFINSSGIMFSCLDPLNKYNYVGFLSIFYRLQKMCIPCCFLKNQSHTETFSSCVYQKEIASDVINPYILNFGKVVTKSKISFLPIIFDSFFNEGVKIIFEQDNKRLKETIGYHVIKSCDEDIKRLRTISDIIAFVNEDKNILIAEDIIYFPMNYVDIGTRVYILIQEIVHEIVVVKKHMSKDAIEVFPPNYKLVKNLFPRQTKFITIRSDSGMELTTDGFLVDGKEFNVDLSSNYVAFTKNITTPYTLSKYFSPLFKYAITESKNRFMKTWLINTMLRLGIDLDLDTNILPKLEKYYPNHGKSV.

The protein belongs to the poxviridae VETF large subunit family. As to quaternary structure, heterodimer of a 70 kDa and a 82 kDa subunit. Part of the early transcription complex composed of ETF, RAP94, and the DNA-directed RNA polymerase.

It is found in the virion. Functionally, acts with RNA polymerase to initiate transcription from early gene promoters. Is recruited by the RPO-associated protein of 94 kDa (RAP94) to form the early transcription complex, which also contains the core RNA polymerase. ETF heterodimer binds to early gene promoters. The polypeptide is Early transcription factor 82 kDa subunit (VETFL) (Oryctolagus cuniculus (Rabbit)).